The following is a 244-amino-acid chain: 5-oxoprolinase subunit A (244 aa).

It belongs to the LamB/PxpA family. As to quaternary structure, forms a complex composed of PxpA, PxpB and PxpC.

It catalyses the reaction 5-oxo-L-proline + ATP + 2 H2O = L-glutamate + ADP + phosphate + H(+). Catalyzes the cleavage of 5-oxoproline to form L-glutamate coupled to the hydrolysis of ATP to ADP and inorganic phosphate. The polypeptide is 5-oxoprolinase subunit A (Shigella flexneri serotype 5b (strain 8401)).